We begin with the raw amino-acid sequence, 107 residues long: Large ribosomal subunit protein uL23 (107 aa).

It belongs to the universal ribosomal protein uL23 family. Part of the 50S ribosomal subunit. Contacts protein L29, and trigger factor when it is bound to the ribosome.

Its function is as follows. One of the early assembly proteins it binds 23S rRNA. One of the proteins that surrounds the polypeptide exit tunnel on the outside of the ribosome. Forms the main docking site for trigger factor binding to the ribosome. The chain is Large ribosomal subunit protein uL23 from Rhodopirellula baltica (strain DSM 10527 / NCIMB 13988 / SH1).